Here is a 478-residue protein sequence, read N- to C-terminus: Pathogenicity cluster 5 protein d (478 aa).

Residues 1–19 (MQIQNLIAALAGMAVVAEA) form the signal peptide. Disordered regions lie at residues 35–89 (RQNK…GQAN) and 299–400 (NGGK…GGKG). Over residues 38-64 (KGGNNNNNNNNNNNNNNNNNKNNGGNN) the composition is skewed to low complexity. Residues 65 to 89 (QLCLNPNNVQKGSQQAGTPKQGQAN) show a composition bias toward polar residues. Residues 316–326 (NNDGGGGGNDG) are compositionally biased toward gly residues. Composition is skewed to low complexity over residues 327–348 (GNNSANNSGSGNKQGGKQQNGA) and 379–393 (TQAGGSASNSATNGN). Asn-328 and Asn-332 each carry an N-linked (GlcNAc...) asparagine glycan.

The protein localises to the secreted. Secreted protein required for appressorial penetration of intact host epidermal cells and for pathogenicit, but not for subsequent biotrophic and necrotrophic colonization of leaves. In Colletotrichum graminicola (strain M1.001 / M2 / FGSC 10212) (Maize anthracnose fungus), this protein is Pathogenicity cluster 5 protein d.